Consider the following 325-residue polypeptide: DNA-directed RNA polymerase subunit alpha (325 aa).

An alpha N-terminal domain (alpha-NTD) region spans residues 1-239; sequence MQQFLRYNIN…DHLKPLIDIN (239 aa). Positions 255–325 are alpha C-terminal domain (alpha-CTD); sequence EKNKKLSIPI…ELYDLKLKNN (71 aa).

This sequence belongs to the RNA polymerase alpha chain family. Homodimer. The RNAP catalytic core consists of 2 alpha, 1 beta, 1 beta' and 1 omega subunit. When a sigma factor is associated with the core the holoenzyme is formed, which can initiate transcription.

It catalyses the reaction RNA(n) + a ribonucleoside 5'-triphosphate = RNA(n+1) + diphosphate. Its function is as follows. DNA-dependent RNA polymerase catalyzes the transcription of DNA into RNA using the four ribonucleoside triphosphates as substrates. This chain is DNA-directed RNA polymerase subunit alpha, found in Mycoplasmoides gallisepticum (strain R(low / passage 15 / clone 2)) (Mycoplasma gallisepticum).